The following is a 407-amino-acid chain: E3 ubiquitin-protein ligase IE2 (407 aa).

A compositionally biased stretch (polar residues) spans 1–10 (MSRQINAATP). The disordered stretch occupies residues 1-69 (MSRQINAATP…RVSEENVQII (69 aa)). Residues 13 to 25 (SRHHRLSLSRRRI) show a composition bias toward basic residues. The span at 31-47 (SEAQPSSSSRSQTSSSS) shows a compositional bias: low complexity. Residues 127–158 (QQYQNNIASETAAQRALQRALDLEAQLMNEIA) are a coiled coil. The interval 179 to 200 (QSPDLFASPQSSEQQQQSEPEE) is disordered. Residues 186–196 (SPQSSEQQQQS) are compositionally biased toward low complexity. The RING-type; degenerate zinc-finger motif lies at 206-254 (CNICFTTFKDTKNVNSSFVTTTHCNHAVCFKCYVKIIMANSVYKCFCSA). A coiled-coil region spans residues 336–393 (LKHKHAVAELDLQKANYDLQESTKKSEELQSTVNNLQEQLNKQVVESQAKFLEFERNN).

The protein belongs to the alphabaculovirus IE2 protein family. In terms of assembly, homooligomer. Post-translationally, auto-ubiquitinated.

The protein resides in the host nucleus. It carries out the reaction S-ubiquitinyl-[E2 ubiquitin-conjugating enzyme]-L-cysteine + [acceptor protein]-L-lysine = [E2 ubiquitin-conjugating enzyme]-L-cysteine + N(6)-ubiquitinyl-[acceptor protein]-L-lysine.. Its function is as follows. RING-finger E3 ubiquitin ligase that plays an important regulatory role during the initial stages of infection. Migrates to specific nuclear foci early in infection supposely to prepare the sites for viral replication by targeting and ubiquitinating host proteins. The protein is E3 ubiquitin-protein ligase IE2 (IE2) of Rachiplusia ou multiple nucleopolyhedrovirus (strain R1) (RoMNPV).